Here is a 389-residue protein sequence, read N- to C-terminus: MIQIDTIPKELQSIQPFVRRFNELEAHNPVIAYWSLYWAAQMALSSSHGVSNECKDFLLSLIEHLEDLRKNLGENENVSDETSAKAYVESFSLEVLVQAERNSKNGKPDVQAYLAARDFLELSRIWGPPTEQITKSIKFCKLRALQVANPQRKAKTPSNHATEELQQSSTNSTTLPTQEAAVETNASASHETSFALPTTSPAASLSISPTKSAAVSSEPNVEADVKSLSSTPAAPQLNSPSHSYEPTTFPSTTSITENLPTIDPTRSTRSSSHIQSLSPESKQTSDGHRPPSPTSITTTSTSIDPSVAFSSKSTLATTRTNAPLSRPSQPTKASPLNKFSALEAIQSARSHARYAYSALDYEDTTTAIHHLKSALKLLEEEEQGNHTAD.

Residues 149–335 (NPQRKAKTPS…RPSQPTKASP (187 aa)) form a disordered region. Polar residues-rich tracts occupy residues 156-177 (TPSN…TLPT), 184-219 (TNAS…SSEP), and 227-282 (SLSS…PESK). The segment covering 294 to 306 (TSITTTSTSIDPS) has biased composition (low complexity). Residues 308–334 (AFSSKSTLATTRTNAPLSRPSQPTKAS) show a composition bias toward polar residues.

It belongs to the VTA1 family. Homodimer (in cytoplasm).

The protein resides in the cytoplasm. It is found in the endosome membrane. Has a role in the formation of the multivesicular body (MVB). Required for the sorting of lipids to form intralumenal vesicles and for fluid-phase transport to the vacuole. Required for sorting several plasma membrane proteins into the MVB. This chain is Vacuolar protein sorting-associated protein vts1 (vts1), found in Schizosaccharomyces pombe (strain 972 / ATCC 24843) (Fission yeast).